The chain runs to 151 residues: Conidium-specific protein (151 aa).

Positions 1-72 (MAKPHCSSRS…FSGDPDSEVE (72 aa)) are disordered. The segment covering 48 to 60 (RKDNSADKGDTLR) has biased composition (basic and acidic residues).

The sequence is that of Conidium-specific protein (SpoC1-C1D) from Emericella nidulans (strain FGSC A4 / ATCC 38163 / CBS 112.46 / NRRL 194 / M139) (Aspergillus nidulans).